Consider the following 56-residue polypeptide: uncharacterized protein (56 aa).

This is an uncharacterized protein from Orgyia pseudotsugata (Douglas-fir tussock moth).